A 236-amino-acid polypeptide reads, in one-letter code: 15,16-dihydrobiliverdin:ferredoxin oxidoreductase (236 aa).

The protein belongs to the HY2 family.

The catalysed reaction is 15,16-dihydrobiliverdin + oxidized 2[4Fe-4S]-[ferredoxin] = biliverdin IXalpha + reduced 2[4Fe-4S]-[ferredoxin] + 2 H(+). Functionally, catalyzes the two-electron reduction of biliverdin IX-alpha at the C15 methine bridge. The chain is 15,16-dihydrobiliverdin:ferredoxin oxidoreductase from Prochlorococcus marinus (strain MIT 9215).